A 300-amino-acid polypeptide reads, in one-letter code: Sporulation protein SPS18 (300 aa).

The Arf-GAP domain occupies 11–130 (ENRKRLLRAK…LANEVRSNDI (120 aa)). The C4-type zinc finger occupies 28-51 (CFECKSVNPQFVSCSFGIFICVNC).

This is Sporulation protein SPS18 (SPS18) from Saccharomyces cerevisiae (strain ATCC 204508 / S288c) (Baker's yeast).